The following is a 331-amino-acid chain: MKVYAAPFEKFVNLADARLGTKILSVTDDWFADANRLFQPTPAVWKEGVFDDNGKWMDGWESRRKRFEGYDSAVIRLGVAGTIKGVDIDTSFFTGNFPPSASLEACFLASGEPDENTAWTEVLPSVELQGNSHHYHEITNDQAFSHLRFNIYPDGGVARLRVYGVPHRDWSKVSEDEQIDLVAALNGGRSIACSDEHYGSMSNILNPGRGVNMGDGWETARRRTPGNDWVIVALGHKGEVEKVIVDTLHFKGNYPDSCSIQGAFVKGGTDSQIETQSLFWRELLPSQKLTMHAEHEFAEQINAIGPITHIRLNVFPDGGVSRLRVLGKVSR.

This sequence belongs to the allantoicase family.

It catalyses the reaction allantoate + H2O = (S)-ureidoglycolate + urea. It functions in the pathway nitrogen metabolism; (S)-allantoin degradation; (S)-ureidoglycolate from allantoate (aminidohydrolase route): step 1/1. The protein is Probable allantoicase of Pseudomonas savastanoi pv. phaseolicola (strain 1448A / Race 6) (Pseudomonas syringae pv. phaseolicola (strain 1448A / Race 6)).